Here is a 187-residue protein sequence, read N- to C-terminus: MSGSSGCPFFLWGLLAFLGLALVISLIFNISHYVEKQRRDEIYRYSDDYIPRVDEYYVEDAPIYGNLENIIPEPLDENCYEQMKGRPQRSASDPQEVAAPAQVPAEAQMCYASLDHSVKGKRRRPRKQNTNVSDRGKDTQVYTMDANVSQINMVESFPPDNQVVEESIHDDPARLFGLIRAKREPVI.

The Extracellular segment spans residues 1–7; the sequence is MSGSSGC. A helical; Signal-anchor for type III membrane protein transmembrane segment spans residues 8-28; sequence PFFLWGLLAFLGLALVISLIF. Residues 29 to 187 are Cytoplasmic-facing; it reads NISHYVEKQR…LIRAKREPVI (159 aa). S46 carries the phosphoserine modification. Residue Y80 is modified to Phosphotyrosine. The tract at residues 80 to 83 is interaction with PIK3R1; sequence YEQM. A disordered region spans residues 117–138; the sequence is SVKGKRRRPRKQNTNVSDRGKD.

Homodimer; disulfide-linked. Interacts with CD3Z. When phosphorylated, interacts with PIK3R1. Post-translationally, phosphorylated on tyrosines upon TCR activation. Present in T-cells (at protein level).

It localises to the cell membrane. Stabilizes the TCR (T-cell antigen receptor)/CD3 complex at the surface of T-cells. The chain is T-cell receptor-associated transmembrane adapter 1 (Trat1) from Mus musculus (Mouse).